The primary structure comprises 282 residues: S-formylglutathione hydrolase (282 aa).

N-acetylalanine is present on Ala2. Position 4 is an N6-succinyllysine (Lys4). Residues Ser149, Asp226, and His260 each act as charge relay system in the active site.

Belongs to the esterase D family. As to quaternary structure, homodimer.

The protein resides in the cytoplasm. It is found in the cytoplasmic vesicle. The catalysed reaction is S-formylglutathione + H2O = formate + glutathione + H(+). In terms of biological role, serine hydrolase involved in the detoxification of formaldehyde. This Bos taurus (Bovine) protein is S-formylglutathione hydrolase (ESD).